The chain runs to 533 residues: Trigger factor (533 aa).

A PPIase FKBP-type domain is found at G164–T249. Positions E436–K533 are disordered. The segment covering A465–A477 has biased composition (basic residues). Residues A481–A490 are compositionally biased toward basic and acidic residues. Composition is skewed to basic residues over residues A494 to T506 and P515 to K533.

This sequence belongs to the FKBP-type PPIase family. Tig subfamily.

The protein localises to the cytoplasm. The enzyme catalyses [protein]-peptidylproline (omega=180) = [protein]-peptidylproline (omega=0). Involved in protein export. Acts as a chaperone by maintaining the newly synthesized protein in an open conformation. Functions as a peptidyl-prolyl cis-trans isomerase. The polypeptide is Trigger factor (Erythrobacter litoralis (strain HTCC2594)).